The following is a 271-amino-acid chain: Probable ribosomal RNA small subunit methyltransferase A (271 aa).

Positions 19, 21, 46, 67, 92, and 107 each coordinate S-adenosyl-L-methionine.

It belongs to the class I-like SAM-binding methyltransferase superfamily. rRNA adenine N(6)-methyltransferase family. RsmA subfamily.

Its subcellular location is the cytoplasm. Specifically dimethylates two adjacent adenosines in the loop of a conserved hairpin near the 3'-end of 16S rRNA in the 30S particle. May play a critical role in biogenesis of 30S subunits. The protein is Probable ribosomal RNA small subunit methyltransferase A of Methanosarcina mazei (strain ATCC BAA-159 / DSM 3647 / Goe1 / Go1 / JCM 11833 / OCM 88) (Methanosarcina frisia).